The following is a 422-amino-acid chain: N-acylglucosamine 2-epimerase (422 aa).

Residues 185–206 are leucine-zipper; that stretch reads LLNLVEQLGEADEELAGISAEL.

Belongs to the N-acylglucosamine 2-epimerase family. Homodimer. Forms a heterodimer with renin and inhibits its activity.

It catalyses the reaction an N-acyl-D-glucosamine = an N-acyl-D-mannosamine. Its pathway is amino-sugar metabolism; N-acetylneuraminate degradation. Its function is as follows. Catalyzes the interconversion of N-acetylglucosamine to N-acetylmannosamine. Involved in the N-glycolylneuraminic acid (Neu5Gc) degradation pathway. The sequence is that of N-acylglucosamine 2-epimerase (RENBP) from Bos taurus (Bovine).